We begin with the raw amino-acid sequence, 179 residues long: Large ribosomal subunit protein uL5 (179 aa).

The protein belongs to the universal ribosomal protein uL5 family. As to quaternary structure, part of the 50S ribosomal subunit; part of the 5S rRNA/L5/L18/L25 subcomplex. Contacts the 5S rRNA and the P site tRNA. Forms a bridge to the 30S subunit in the 70S ribosome.

Its function is as follows. This is one of the proteins that bind and probably mediate the attachment of the 5S RNA into the large ribosomal subunit, where it forms part of the central protuberance. In the 70S ribosome it contacts protein S13 of the 30S subunit (bridge B1b), connecting the 2 subunits; this bridge is implicated in subunit movement. Contacts the P site tRNA; the 5S rRNA and some of its associated proteins might help stabilize positioning of ribosome-bound tRNAs. This Janthinobacterium sp. (strain Marseille) (Minibacterium massiliensis) protein is Large ribosomal subunit protein uL5.